Consider the following 309-residue polypeptide: Homoserine O-succinyltransferase (309 aa).

Cysteine 142 functions as the Acyl-thioester intermediate in the catalytic mechanism. Substrate is bound by residues lysine 163 and serine 192. The active-site Proton acceptor is histidine 235. Residue glutamate 237 is part of the active site. Arginine 249 lines the substrate pocket.

Belongs to the MetA family.

The protein resides in the cytoplasm. It catalyses the reaction L-homoserine + succinyl-CoA = O-succinyl-L-homoserine + CoA. It participates in amino-acid biosynthesis; L-methionine biosynthesis via de novo pathway; O-succinyl-L-homoserine from L-homoserine: step 1/1. Transfers a succinyl group from succinyl-CoA to L-homoserine, forming succinyl-L-homoserine. The protein is Homoserine O-succinyltransferase of Citrobacter koseri (strain ATCC BAA-895 / CDC 4225-83 / SGSC4696).